Consider the following 515-residue polypeptide: Maturase K (515 aa).

Belongs to the intron maturase 2 family. MatK subfamily.

It localises to the plastid. Its subcellular location is the chloroplast. Usually encoded in the trnK tRNA gene intron. Probably assists in splicing its own and other chloroplast group II introns. The chain is Maturase K from Sorghum bicolor (Sorghum).